A 163-amino-acid polypeptide reads, in one-letter code: Cytochrome b6-f complex subunit 4 (163 aa).

Transmembrane regions (helical) follow at residues 36–56 (LLYI…GLAV), 95–115 (LLGV…PFLE), and 131–151 (TVFL…TLPI).

This sequence belongs to the cytochrome b family. PetD subfamily. As to quaternary structure, the 4 large subunits of the cytochrome b6-f complex are cytochrome b6, subunit IV (17 kDa polypeptide, petD), cytochrome f and the Rieske protein, while the 4 small subunits are petG, petL, petM and petN. The complex functions as a dimer.

The protein resides in the plastid. The protein localises to the chloroplast thylakoid membrane. Its function is as follows. Component of the cytochrome b6-f complex, which mediates electron transfer between photosystem II (PSII) and photosystem I (PSI), cyclic electron flow around PSI, and state transitions. In Pelargonium hortorum (Common geranium), this protein is Cytochrome b6-f complex subunit 4.